We begin with the raw amino-acid sequence, 99 residues long: Nucleoid-associated protein EbfC (99 aa).

It belongs to the YbaB/EbfC family. In terms of assembly, homodimer.

The protein resides in the cytoplasm. The protein localises to the nucleoid. In terms of biological role, binds to DNA and alters its conformation. May be involved in regulation of gene expression, nucleoid organization and DNA protection. In Borrelia duttonii (strain Ly), this protein is Nucleoid-associated protein EbfC.